The sequence spans 812 residues: Fibrous sheath CABYR-binding protein (812 aa).

The tract at residues 1–66 (MEESDEPEQP…SIGNIPGGKA (66 aa)) is disordered. A phosphoserine mark is found at Ser25, Ser57, Ser125, Ser133, Ser184, and Ser273. Disordered stretches follow at residues 269-333 (IQAP…PKGT), 367-388 (DSGR…PPLS), 424-547 (FEDQ…PPSL), and 672-741 (PAEE…PSVK). Low complexity predominate over residues 275–286 (AKETSAAETTAK). Positions 488–501 (EVPPLPTEEWPLPP) are enriched in pro residues. The segment covering 502 to 513 (VTEESPAEVTPP) has biased composition (low complexity). The span at 514–528 (ETEEGPIEPAEEGPE) shows a compositional bias: acidic residues.

In terms of assembly, interacts with CABYR.

It localises to the cell projection. The protein localises to the cilium. Its subcellular location is the flagellum. Functionally, may be involved in the later stages of fibrous sheath biogenesis. Binds calcium. The sequence is that of Fibrous sheath CABYR-binding protein from Rattus norvegicus (Rat).